Consider the following 300-residue polypeptide: MIKTSWEGNCFLNFFNNKASIGNVDKTIFKSKSTSPYKLLKSTHDEEGRCILPVLHTAGGLVGGDLLQFEVNLEKNSKVLLTTSSAQKVYGSVGRSKINPKGSFSKQKNYIKILDNSHLEYLPQETIIFANGLYDQKFKVFISENSSFLFTDLIRLGRSSSGESIESGVFRSKLEIIRNNDLYDDWEYVDQIELSKASYEAKSGMDYMPVFGSLIWVCEKDFSKLKINNLVGNIKKFFKESDNHLSIGILENGISVRFLGSSSQEARKCFFCIWKQIRSVCGFCEPKYQGVWPLQDSMNY.

Belongs to the UreD family. In terms of assembly, ureD, UreF and UreG form a complex that acts as a GTP-hydrolysis-dependent molecular chaperone, activating the urease apoprotein by helping to assemble the nickel containing metallocenter of UreC. The UreE protein probably delivers the nickel.

It localises to the cytoplasm. Its function is as follows. Required for maturation of urease via the functional incorporation of the urease nickel metallocenter. This Prochlorococcus marinus (strain MIT 9312) protein is Urease accessory protein UreD.